Here is a 391-residue protein sequence, read N- to C-terminus: 8-amino-7-oxononanoate synthase (391 aa).

R19 is a substrate binding site. Residue 106 to 107 participates in pyridoxal 5'-phosphate binding; the sequence is GY. Residue H131 coordinates substrate. Residues S178, H206, and T234 each coordinate pyridoxal 5'-phosphate. The residue at position 237 (K237) is an N6-(pyridoxal phosphate)lysine. T353 serves as a coordination point for substrate.

The protein belongs to the class-II pyridoxal-phosphate-dependent aminotransferase family. BioF subfamily. As to quaternary structure, homodimer. The cofactor is pyridoxal 5'-phosphate.

The enzyme catalyses 6-carboxyhexanoyl-[ACP] + L-alanine + H(+) = (8S)-8-amino-7-oxononanoate + holo-[ACP] + CO2. It participates in cofactor biosynthesis; biotin biosynthesis. Its function is as follows. Catalyzes the decarboxylative condensation of pimeloyl-[acyl-carrier protein] and L-alanine to produce 8-amino-7-oxononanoate (AON), [acyl-carrier protein], and carbon dioxide. This is 8-amino-7-oxononanoate synthase from Geobacter metallireducens (strain ATCC 53774 / DSM 7210 / GS-15).